A 631-amino-acid polypeptide reads, in one-letter code: Phosphomethylpyrimidine synthase (631 aa).

Substrate contacts are provided by residues Asn-239, Met-268, Tyr-297, His-333, Ser-353 to Gly-355, Asp-394 to Arg-397, and Glu-433. Residue His-437 coordinates Zn(2+). Tyr-460 is a binding site for substrate. Residue His-501 participates in Zn(2+) binding. 3 residues coordinate [4Fe-4S] cluster: Cys-581, Cys-584, and Cys-589.

It belongs to the ThiC family. In terms of assembly, homodimer. Requires [4Fe-4S] cluster as cofactor.

It catalyses the reaction 5-amino-1-(5-phospho-beta-D-ribosyl)imidazole + S-adenosyl-L-methionine = 4-amino-2-methyl-5-(phosphooxymethyl)pyrimidine + CO + 5'-deoxyadenosine + formate + L-methionine + 3 H(+). It participates in cofactor biosynthesis; thiamine diphosphate biosynthesis. Its function is as follows. Catalyzes the synthesis of the hydroxymethylpyrimidine phosphate (HMP-P) moiety of thiamine from aminoimidazole ribotide (AIR) in a radical S-adenosyl-L-methionine (SAM)-dependent reaction. This Escherichia coli O45:K1 (strain S88 / ExPEC) protein is Phosphomethylpyrimidine synthase.